Consider the following 670-residue polypeptide: C6 finger domain transcription factor iacK (670 aa).

A disordered region spans residues 1–84 (MNTSPDYAQP…GEPKQSGPTV (84 aa)). Positions 44–54 (GPPPPPPPPPT) are enriched in pro residues. Residues 55–74 (ATATAATAAATTTTAAPSAT) are compositionally biased toward low complexity. The zn(2)-C6 fungal-type DNA-binding region spans 88 to 114 (CLACRSKHLKCDGGNPCARCQASESIC). A disordered region spans residues 122 to 157 (GYKGPRRNGTQNPNKRHAAASDDGSPNSNGSNESCP). Residues 142 to 155 (SDDGSPNSNGSNES) are compositionally biased toward low complexity.

The protein resides in the nucleus. Transcription factor; part of the gene cluster that mediates the biosynthesis of iso-A82775C, a enylepoxycyclohexane and biosynthetic precursor of the chloropestolide anticancer natural products. The chain is C6 finger domain transcription factor iacK from Pestalotiopsis fici (strain W106-1 / CGMCC3.15140).